The sequence spans 290 residues: N-acetylmannosamine kinase (290 aa).

ATP-binding positions include 6-13 and 132-139; these read ALDIGGTK and GVGGGIIL. Residues His156, Cys166, Cys168, and Cys173 each coordinate Zn(2+).

It belongs to the ROK (NagC/XylR) family. NanK subfamily. In terms of assembly, homodimer.

The catalysed reaction is an N-acyl-D-mannosamine + ATP = an N-acyl-D-mannosamine 6-phosphate + ADP + H(+). The protein operates within amino-sugar metabolism; N-acetylneuraminate degradation; D-fructose 6-phosphate from N-acetylneuraminate: step 2/5. In terms of biological role, catalyzes the phosphorylation of N-acetylmannosamine (ManNAc) to ManNAc-6-P. This is N-acetylmannosamine kinase from Yersinia pseudotuberculosis serotype O:1b (strain IP 31758).